Consider the following 59-residue polypeptide: Prokaryotic ubiquitin-like protein UBact (59 aa).

A disordered region spans residues 1-59 (MEMTDPLRREEKKESSPDPKEESGPSRPDVSRPGRDSLLKRMKKVDPKQSEKYKQRTGQ). Gln-59 is modified (deamidated glutamine). Gln-59 participates in a covalent cross-link: Isoglutamyl lysine isopeptide (Gln-Lys) (interchain with K-? in acceptor proteins).

This sequence belongs to the ubiquitin-like protein UBact family. In terms of processing, may be modified by deamidation of its C-terminal glutamine to glutamate by the adjacently encoded deamidase. This could be a prerequisite to the subsequent conjugation, as shown in the other prokaryotic ubiquitin-like protein Pup.

Functionally, may function as a protein modifier covalently attached to lysine residues of substrate proteins. This may serve to target the modified proteins for degradation by proteasomes. The chain is Prokaryotic ubiquitin-like protein UBact from Nitrospina gracilis (strain 3/211).